A 299-amino-acid chain; its full sequence is GTPase Era (299 aa).

One can recognise an Era-type G domain in the interval 9-177 (RSGSVAVIGR…VGDLLKLVPE (169 aa)). The interval 17–24 (GRPNVGKS) is G1. A GTP-binding site is contributed by 17 to 24 (GRPNVGKS). Residues 43 to 47 (QTTRH) form a G2 region. Positions 64-67 (DTPG) are G3. GTP-binding positions include 64-68 (DTPGL) and 126-129 (NKVD). The G4 stretch occupies residues 126-129 (NKVD). The tract at residues 156–158 (VSA) is G5. Residues 200-284 (VREQLMRQLG…FLETWVRVRE (85 aa)) form the KH type-2 domain.

This sequence belongs to the TRAFAC class TrmE-Era-EngA-EngB-Septin-like GTPase superfamily. Era GTPase family. As to quaternary structure, monomer.

Its subcellular location is the cytoplasm. It localises to the cell inner membrane. Functionally, an essential GTPase that binds both GDP and GTP, with rapid nucleotide exchange. Plays a role in 16S rRNA processing and 30S ribosomal subunit biogenesis and possibly also in cell cycle regulation and energy metabolism. In Xanthomonas oryzae pv. oryzae (strain MAFF 311018), this protein is GTPase Era.